The chain runs to 433 residues: 3-phosphoshikimate 1-carboxyvinyltransferase (433 aa).

3-phosphoshikimate is bound by residues Lys-22, Ser-23, and Arg-27. Lys-22 is a phosphoenolpyruvate binding site. The phosphoenolpyruvate site is built by Gly-94 and Arg-122. Residues Ser-168, Ser-169, Gln-170, Ser-196, Asp-319, and Lys-346 each coordinate 3-phosphoshikimate. Gln-170 is a binding site for phosphoenolpyruvate. Asp-319 acts as the Proton acceptor in catalysis. Phosphoenolpyruvate is bound by residues Arg-350, Arg-394, and Lys-418.

It belongs to the EPSP synthase family. As to quaternary structure, monomer.

It is found in the cytoplasm. It carries out the reaction 3-phosphoshikimate + phosphoenolpyruvate = 5-O-(1-carboxyvinyl)-3-phosphoshikimate + phosphate. The protein operates within metabolic intermediate biosynthesis; chorismate biosynthesis; chorismate from D-erythrose 4-phosphate and phosphoenolpyruvate: step 6/7. Its function is as follows. Catalyzes the transfer of the enolpyruvyl moiety of phosphoenolpyruvate (PEP) to the 5-hydroxyl of shikimate-3-phosphate (S3P) to produce enolpyruvyl shikimate-3-phosphate and inorganic phosphate. The chain is 3-phosphoshikimate 1-carboxyvinyltransferase from Nitrosomonas eutropha (strain DSM 101675 / C91 / Nm57).